Consider the following 314-residue polypeptide: MNSGVPATLAVRRVKFFGQHGGEVNSSAFSPDGQMLLTGSEDGCVYGWETRSGQLLWRLGGHTGPVKFCRFSPDGHLFASASCDCTVRLWDVARAKCLRVLKGHQRSVETVSFSPDSRQLASGGWDKRVMLWDVQSGQMLRLLVGHRDSIQSSDFSPTVNCLATGSWDSTVHIWDLRMVTPAVSHQALEGHSANISCLCYSASGLLASGSWDKTIHIWKPTTSSLLIQLKGHVTWVKSIAFSPDELWLASAGYSRMVKVWDCNTGKCLETLKGVLDVAHTCAFTPDGKILVSGAADQTRRQISRTSKSPRDPQT.

WD repeat units follow at residues 19–58 (QHGG…LLWR), 61–100 (GHTG…CLRV), 103–142 (GHQR…MLRL), 145–184 (GHRD…PAVS), 190–228 (GHSA…LLIQ), 231–272 (GHVT…ETLK), and 274–312 (VLDV…PRDP). A disordered region spans residues 294-314 (AADQTRRQISRTSKSPRDPQT).

The polypeptide is WD repeat-containing protein 38 (WDR38) (Homo sapiens (Human)).